Reading from the N-terminus, the 219-residue chain is Factor in the germline alpha (219 aa).

Positions 65–117 constitute a bHLH domain; sequence ERRRVANAKERERIKNLNRGFARLKALVPFLPQSRKPSKVDILKGATEYIQVL. Positions 124–151 are disordered; the sequence is AKDSKKQDPDEQSYSNNSSESHTSSARQ. A compositionally biased stretch (low complexity) spans 136–148; sequence SYSNNSSESHTSS.

Heterodimer with TCF3/isoform E12. As to expression, germ cells. Expressed in the fetal ovary, but not by a range of other tissues. Expression increases across mid-gestation, rising some 40-fold by the time of primordial follicle formation.

Its subcellular location is the nucleus. Germline specific transcription factor implicated in postnatal oocyte-specific gene expression. Plays a key regulatory role in the expression of multiple oocyte-specific genes, including those that initiate folliculogenesis and those that encode the zona pellucida (ZP1, ZP2 and ZP3) required for fertilization and early embryonic survival. Essential for oocytes to survive and form primordial follicles. The persistence of FIGLA in adult females suggests that it may regulate additional pathways that are essential for normal ovarian development. Binds to the E-box (5'-CANNTG-3') of the ZPs (ZP1, ZP2, ZP3) promoters. The chain is Factor in the germline alpha (FIGLA) from Homo sapiens (Human).